Consider the following 106-residue polypeptide: Large ribosomal subunit protein uL24 (106 aa).

The protein belongs to the universal ribosomal protein uL24 family. As to quaternary structure, part of the 50S ribosomal subunit.

Functionally, one of two assembly initiator proteins, it binds directly to the 5'-end of the 23S rRNA, where it nucleates assembly of the 50S subunit. Its function is as follows. One of the proteins that surrounds the polypeptide exit tunnel on the outside of the subunit. In Rhodospirillum rubrum (strain ATCC 11170 / ATH 1.1.1 / DSM 467 / LMG 4362 / NCIMB 8255 / S1), this protein is Large ribosomal subunit protein uL24.